The primary structure comprises 336 residues: Atypical chemokine receptor 1 (336 aa).

Residues 1–63 (MGNCLHQAEL…CNLLDDSSLP (63 aa)) lie on the Extracellular side of the membrane. N-linked (GlcNAc...) asparagine glycosylation is found at Asn16, Asn27, and Asn33. Disulfide bonds link Cys51–Cys276 and Cys129–Cys195. A helical transmembrane segment spans residues 64 to 84 (FFILASVLGILASSTVLFLLF). At 85-95 (RPLFRWQLCPG) the chain is on the cytoplasmic side. A helical membrane pass occupies residues 96-116 (WPVLAQLAVGSTLFSIVVPIL). The Extracellular segment spans residues 117-129 (APGLGNTRSSAPC). A helical transmembrane segment spans residues 130–153 (SLGYCVWYGSAFAQALLLGCHASL). At 154–166 (GPKLGAGQVPGLT) the chain is on the cytoplasmic side. A helical transmembrane segment spans residues 167–187 (LGLSVGLWGAAALLTLPITLA). Over 188 to 207 (SDASDGLCTPIYSTELKALQ) the chain is Extracellular. Residues 208-228 (ATHTVACFAIFVLLPLGLFGA) traverse the membrane as a helical segment. Over 229-244 (KGLKKVLGMGPGPWMN) the chain is Cytoplasmic. The helical transmembrane segment at 245–265 (ILWVWFIFWWPHGVVLGLDFL) threads the bilayer. Topologically, residues 266-287 (VRSKLLLLPTCLAQQVLDLLLN) are extracellular. A helical transmembrane segment spans residues 288 to 308 (LAEALAIVHCVATPLLLALFC). Residues 309–336 (HQATRTLVPSLPLPERWSSPVDTLGSKS) are Cytoplasmic-facing.

This sequence belongs to the G-protein coupled receptor 1 family. Atypical chemokine receptor subfamily.

It is found in the early endosome. It localises to the recycling endosome. Its subcellular location is the membrane. In terms of biological role, atypical chemokine receptor that controls chemokine levels and localization via high-affinity chemokine binding that is uncoupled from classic ligand-driven signal transduction cascades, resulting instead in chemokine sequestration, degradation, or transcytosis. Also known as interceptor (internalizing receptor) or chemokine-scavenging receptor or chemokine decoy receptor. Has a promiscuous chemokine-binding profile, interacting with inflammatory chemokines of both the CXC and the CC subfamilies but not with homeostatic chemokines. Acts as a receptor for chemokines including CCL2, CCL5, CCL7, CCL11, CCL13, CCL14, CCL17, CXCL5, CXCL6, IL8/CXCL8, CXCL11, GRO, RANTES, MCP-1 and TARC. May regulate chemokine bioavailability and, consequently, leukocyte recruitment through two distinct mechanisms: when expressed in endothelial cells, it sustains the abluminal to luminal transcytosis of tissue-derived chemokines and their subsequent presentation to circulating leukocytes; when expressed in erythrocytes, serves as blood reservoir of cognate chemokines but also as a chemokine sink, buffering potential surges in plasma chemokine levels. This is Atypical chemokine receptor 1 (ACKR1) from Saguinus imperator (Emperor tamarin).